The primary structure comprises 505 residues: ATP synthase subunit beta (505 aa).

Residue 158–165 participates in ATP binding; the sequence is GGAGVGKT.

This sequence belongs to the ATPase alpha/beta chains family. As to quaternary structure, F-type ATPases have 2 components, CF(1) - the catalytic core - and CF(0) - the membrane proton channel. CF(1) has five subunits: alpha(3), beta(3), gamma(1), delta(1), epsilon(1). CF(0) has three main subunits: a(1), b(2) and c(9-12). The alpha and beta chains form an alternating ring which encloses part of the gamma chain. CF(1) is attached to CF(0) by a central stalk formed by the gamma and epsilon chains, while a peripheral stalk is formed by the delta and b chains.

Its subcellular location is the cell inner membrane. The catalysed reaction is ATP + H2O + 4 H(+)(in) = ADP + phosphate + 5 H(+)(out). Functionally, produces ATP from ADP in the presence of a proton gradient across the membrane. The catalytic sites are hosted primarily by the beta subunits. The sequence is that of ATP synthase subunit beta from Parabacteroides distasonis (strain ATCC 8503 / DSM 20701 / CIP 104284 / JCM 5825 / NCTC 11152).